The chain runs to 425 residues: Light-independent protochlorophyllide reductase subunit N (425 aa).

[4Fe-4S] cluster contacts are provided by Cys17, Cys42, and Cys103.

Belongs to the BchN/ChlN family. Protochlorophyllide reductase is composed of three subunits; ChlL, ChlN and ChlB. Forms a heterotetramer of two ChlB and two ChlN subunits. It depends on [4Fe-4S] cluster as a cofactor.

It catalyses the reaction chlorophyllide a + oxidized 2[4Fe-4S]-[ferredoxin] + 2 ADP + 2 phosphate = protochlorophyllide a + reduced 2[4Fe-4S]-[ferredoxin] + 2 ATP + 2 H2O. The protein operates within porphyrin-containing compound metabolism; chlorophyll biosynthesis (light-independent). Component of the dark-operative protochlorophyllide reductase (DPOR) that uses Mg-ATP and reduced ferredoxin to reduce ring D of protochlorophyllide (Pchlide) to form chlorophyllide a (Chlide). This reaction is light-independent. The NB-protein (ChlN-ChlB) is the catalytic component of the complex. The sequence is that of Light-independent protochlorophyllide reductase subunit N from Synechococcus sp. (strain CC9605).